Here is a 291-residue protein sequence, read N- to C-terminus: Porphobilinogen deaminase (291 aa).

The residue at position 237 (Cys-237) is an S-(dipyrrolylmethanemethyl)cysteine.

The protein belongs to the HMBS family. As to quaternary structure, monomer. The cofactor is dipyrromethane.

The catalysed reaction is 4 porphobilinogen + H2O = hydroxymethylbilane + 4 NH4(+). Its pathway is porphyrin-containing compound metabolism; protoporphyrin-IX biosynthesis; coproporphyrinogen-III from 5-aminolevulinate: step 2/4. Tetrapolymerization of the monopyrrole PBG into the hydroxymethylbilane pre-uroporphyrinogen in several discrete steps. The protein is Porphobilinogen deaminase of Clostridium acetobutylicum (strain ATCC 824 / DSM 792 / JCM 1419 / IAM 19013 / LMG 5710 / NBRC 13948 / NRRL B-527 / VKM B-1787 / 2291 / W).